Consider the following 296-residue polypeptide: Endonuclease 5 (296 aa).

Positions 1–20 are cleaved as a signal peptide; sequence MRLWIVSVLVLTHLVHGALC. Residues Trp21 and His26 each coordinate a divalent metal cation. Residue 21–26 coordinates substrate; it reads WGKDGH. The cysteines at positions 30 and 62 are disulfide-linked. The a divalent metal cation site is built by Asp66 and His81. Substrate-binding positions include 66–72, 81–84, and 91–96; these read DEIKKLS, HYVN, and NYEYCR. Disulfide bonds link Cys90–Cys243, Cys98–Cys108, and Cys223–Cys230. Substrate contacts are provided by Asn115 and Tyr133. The N-linked (GlcNAc...) asparagine glycan is linked to Asn115. Asn134 carries N-linked (GlcNAc...) asparagine glycosylation. Positions 144, 148, and 154 each coordinate a divalent metal cation. The substrate binding stretch occupies residues 144–193; that stretch reads HYMGDVHQPLHTGFLGDLGGNTIIVNWYHNKSNLHHVWDNMIIDSALETY. An N-linked (GlcNAc...) asparagine glycan is attached at Asn173. 2 residues coordinate a divalent metal cation: His178 and Asp182. N-linked (GlcNAc...) asparagine glycosylation occurs at Asn195. A propeptide spans 281-296 (removed in mature form); the sequence is ATLNRIFSAKPKLAGL.

Belongs to the nuclease type I family. As to quaternary structure, monomer. Requires Zn(2+) as cofactor.

The enzyme catalyses Endonucleolytic cleavage to 5'-phosphomononucleotide and 5'-phosphooligonucleotide end-products.. Hydrolyzes, with low efficiency, only single-stranded DNA and RNA without apparent specificity for bases. Endonuclease that recognizes and cleaves some mismatches with high efficiency, including heteroduplex double-stranded DNA; mostly efficient on T/G, A/G and G/G mismatches, less efficient for T/T and poorly efficient for C/C, A/A, T/C and A/C. This Arabidopsis thaliana (Mouse-ear cress) protein is Endonuclease 5.